Reading from the N-terminus, the 30-residue chain is Toxic protein AapA1 (30 aa).

It belongs to the AapA toxin family.

It localises to the cell inner membrane. Transcription of the aapA1 gene generates a full-length transcript whose folding impedes translation. Processing of the 3' end of the aapA1 message generates a shorter transcript that becomes translatable after a structural rearrangement. The processing also makes it more susceptible to forming dsRNA with IsoA1 which leads to duplex RNA degradation by RNase 3 (rnc). Functionally, may be involved in response to oxidative stress. Toxic component of a type I toxin-antitoxin (TA) system. When overexpression is induced in situ in the absence of its cognate antisense RNA antitoxin IsoA1 it leads to cell growth arrest and cell death without lysis. Neutralized by IsoA1 RNA which forms an extensive duplex with the mRNA. Binds artificial prokaryotic and eukaryotic lipid membranes, with 30-fold higher affinity for prokaryotic membranes. Molecular dynamics suggests the peptide penetrates the membrane leading to lipid reorganization and thinning of the bilayer. Induction of toxin in the absence of antitoxin RNA causes a fast conversion of cells from spiral-shaped to coccoid forms; cells have no visible membrane defects and resemble wild-type 'aging coccoids'. Toxin causes a moderate decrease in membrane potential and ATP content and alterations in peptidoglycan muropeptide abundance; GlcNAc-MurNAc dipeptides increase while GlcNAc-MurNAc tripeptides decrease (i.e. a faster phenocopy of cell aging). Deletion of all 6 AapA/IsoA TA loci in strain B128 leads to slower than wild-type conversion of H2O2-treated cells to the coccoid form. This suggests oxidative stress triggers coccoid transformation via these type I TA systems, although other factors eventually drive the morphology change. The sequence is that of Toxic protein AapA1 from Helicobacter pylori (strain ATCC 700392 / 26695) (Campylobacter pylori).